The chain runs to 475 residues: Ribulose bisphosphate carboxylase large chain (475 aa).

The propeptide occupies 1–2 (MS). An N-acetylproline modification is found at P3. K14 is subject to N6,N6,N6-trimethyllysine. The substrate site is built by N123 and T173. K175 acts as the Proton acceptor in catalysis. Residue K177 coordinates substrate. K201, D203, and E204 together coordinate Mg(2+). K201 carries the post-translational modification N6-carboxylysine. H294 serves as the catalytic Proton acceptor. 3 residues coordinate substrate: R295, H327, and S379.

The protein belongs to the RuBisCO large chain family. Type I subfamily. In terms of assembly, heterohexadecamer of 8 large chains and 8 small chains; disulfide-linked. The disulfide link is formed within the large subunit homodimers. Requires Mg(2+) as cofactor. Post-translationally, the disulfide bond which can form in the large chain dimeric partners within the hexadecamer appears to be associated with oxidative stress and protein turnover.

Its subcellular location is the plastid. It is found in the chloroplast. It catalyses the reaction 2 (2R)-3-phosphoglycerate + 2 H(+) = D-ribulose 1,5-bisphosphate + CO2 + H2O. The enzyme catalyses D-ribulose 1,5-bisphosphate + O2 = 2-phosphoglycolate + (2R)-3-phosphoglycerate + 2 H(+). In terms of biological role, ruBisCO catalyzes two reactions: the carboxylation of D-ribulose 1,5-bisphosphate, the primary event in carbon dioxide fixation, as well as the oxidative fragmentation of the pentose substrate in the photorespiration process. Both reactions occur simultaneously and in competition at the same active site. This Atriplex rosea (Red orache) protein is Ribulose bisphosphate carboxylase large chain.